The primary structure comprises 339 residues: Dipeptide transport system permease protein DppB (339 aa).

The Periplasmic portion of the chain corresponds to 1-9 (MLQFILRRL). A helical membrane pass occupies residues 10–30 (GLVIPTFIGITLLTFAFVHMI). Residues 31–102 (PGDPVMIMAG…VPRFQATLEL (72 aa)) are Cytoplasmic-facing. An ABC transmembrane type-1 domain is found at 96 to 328 (FQATLELGVC…LVNLLVDLLY (233 aa)). Residues 103 to 123 (GVCAMIFATAVGIPVGVLAAV) form a helical membrane-spanning segment. The Periplasmic segment spans residues 124-135 (KRGSIFDHTAVG). A helical membrane pass occupies residues 136–156 (LALTGYSMPIFWWGMMLIMLV). At 157–171 (SVHWNLTPVSGRVSD) the chain is on the cytoplasmic side. Residues 172–192 (MVFLDDSNPLTGFMLIDTAIW) traverse the membrane as a helical segment. At 193-200 (GEDGNFID) the chain is on the periplasmic side. Residues 201 to 221 (AVAHMILPAIVLGTIPLAVIV) traverse the membrane as a helical segment. Residues 222-259 (RMTRSSMLEVLGEDYIRTARAKGLTRMRVIIVHALRNA) lie on the Cytoplasmic side of the membrane. A helical transmembrane segment spans residues 260 to 280 (MLPVVTVIGLQVGTLLAGAIL). At 281-309 (TETIFSWPGLGRWLIDALQRRDYPVVQGG) the chain is on the periplasmic side. The helical transmembrane segment at 310 to 330 (VLLVATMIILVNLLVDLLYGV) threads the bilayer. Residues 331–339 (VNPRIRHKK) are Cytoplasmic-facing.

This sequence belongs to the binding-protein-dependent transport system permease family. OppBC subfamily. In terms of assembly, the complex is composed of two ATP-binding proteins (DppD and DppF), two transmembrane proteins (DppB and DppC) and a solute-binding protein (DppA).

It is found in the cell inner membrane. Its function is as follows. Part of the ABC transporter DppABCDF involved in dipeptide transport. Responsible for the translocation of the substrate across the membrane. This chain is Dipeptide transport system permease protein DppB (dppB), found in Escherichia coli O157:H7.